The following is a 102-amino-acid chain: Nucleoid-associated protein BCc_301 (102 aa).

Belongs to the YbaB/EbfC family. In terms of assembly, homodimer.

It localises to the cytoplasm. The protein localises to the nucleoid. Its function is as follows. Binds to DNA and alters its conformation. May be involved in regulation of gene expression, nucleoid organization and DNA protection. The chain is Nucleoid-associated protein BCc_301 from Buchnera aphidicola subsp. Cinara cedri (strain Cc).